Consider the following 426-residue polypeptide: Enolase (426 aa).

Gln-163 serves as a coordination point for (2R)-2-phosphoglycerate. The active-site Proton donor is the Glu-205. Mg(2+)-binding residues include Asp-242, Glu-286, and Asp-313. (2R)-2-phosphoglycerate is bound by residues Lys-338, Arg-367, Ser-368, and Lys-389. The active-site Proton acceptor is the Lys-338.

The protein belongs to the enolase family. Requires Mg(2+) as cofactor.

The protein localises to the cytoplasm. Its subcellular location is the secreted. The protein resides in the cell surface. It carries out the reaction (2R)-2-phosphoglycerate = phosphoenolpyruvate + H2O. Its pathway is carbohydrate degradation; glycolysis; pyruvate from D-glyceraldehyde 3-phosphate: step 4/5. Functionally, catalyzes the reversible conversion of 2-phosphoglycerate (2-PG) into phosphoenolpyruvate (PEP). It is essential for the degradation of carbohydrates via glycolysis. In Gemmatimonas aurantiaca (strain DSM 14586 / JCM 11422 / NBRC 100505 / T-27), this protein is Enolase.